We begin with the raw amino-acid sequence, 633 residues long: Electron transfer flavoprotein-ubiquinone oxidoreductase, mitochondrial (633 aa).

Residues 1-90 (MHRFLVKLSS…NGITSSRCIS (90 aa)) constitute a mitochondrion transit peptide. 102 to 116 (VLIVGAGPAGLSAAI) lines the FAD pocket. An intramembrane segment occupies 140–161 (VGGHIISGNVFEPLALDELLPH). A ubiquinone-binding residues include Gly334 and Gly335. The stretch at 401–421 (IPYPVFPGGAIIGCSAGFLNV) is an intramembrane region. Residues Cys578, Cys602, Cys605, and Cys608 each coordinate [4Fe-4S] cluster. Positions 593–622 (PKLQINAQNCLHCKACDIKDPKQNIEWTVP) constitute a 4Fe-4S ferredoxin-type domain.

It belongs to the ETF-QO/FixC family. [4Fe-4S] cluster is required as a cofactor. FAD serves as cofactor.

The protein resides in the mitochondrion inner membrane. It catalyses the reaction a ubiquinone + reduced [electron-transfer flavoprotein] = a ubiquinol + oxidized [electron-transfer flavoprotein] + H(+). With respect to regulation, up-regulated by KIN10, by S1-bZIP specific dimers, and also by C/S1 bZIP heterodimers. Its function is as follows. Accepts electrons from ETF and reduces ubiquinone. May act downstream of IVD and D2HGDH in the degradation of phytol or chlorophyll during dark-induced senescence and sugar starvation. This Arabidopsis thaliana (Mouse-ear cress) protein is Electron transfer flavoprotein-ubiquinone oxidoreductase, mitochondrial (ETFQO).